The chain runs to 261 residues: 3-hydroxyacyl-CoA dehydrogenase type-2 (261 aa).

Alanine 2 is subject to N-acetylalanine. Serine 20, leucine 22, and aspartate 41 together coordinate NAD(+). Position 53 is an N6-acetyllysine; alternate (lysine 53). At lysine 53 the chain carries N6-succinyllysine; alternate. An NAD(+)-binding site is contributed by valine 65. Lysine 69 carries the post-translational modification N6-acetyllysine. Cysteine 91 lines the NAD(+) pocket. 2 positions are modified to N6-acetyllysine: lysine 99 and lysine 105. Residue serine 155 coordinates substrate. Residues tyrosine 168, lysine 172, phenylalanine 201, and threonine 203 each contribute to the NAD(+) site. The active-site Proton acceptor is the tyrosine 168. Lysine 212 bears the N6-acetyllysine; alternate mark. Position 212 is an N6-succinyllysine; alternate (lysine 212).

It belongs to the short-chain dehydrogenases/reductases (SDR) family. As to quaternary structure, homotetramer. Component of mitochondrial ribonuclease P, a complex composed of TRMT10C/MRPP1, HSD17B10/MRPP2 and PRORP/MRPP3. Interacts with TRMT10C/MRPP1; forming the MRPP1-MRPP2 subcomplex of the mitochondrial ribonuclease P complex.

It localises to the mitochondrion. Its subcellular location is the mitochondrion matrix. It is found in the mitochondrion nucleoid. It carries out the reaction a (3S)-3-hydroxyacyl-CoA + NAD(+) = a 3-oxoacyl-CoA + NADH + H(+). The catalysed reaction is (2S,3S)-3-hydroxy-2-methylbutanoyl-CoA + NAD(+) = 2-methyl-3-oxobutanoyl-CoA + NADH + H(+). It catalyses the reaction testosterone + NAD(+) = androst-4-ene-3,17-dione + NADH + H(+). The enzyme catalyses 5alpha-androstane-3alpha,17beta-diol + NAD(+) = 17beta-hydroxy-5alpha-androstan-3-one + NADH + H(+). It carries out the reaction 17beta-estradiol + NAD(+) = estrone + NADH + H(+). The catalysed reaction is cholate + NAD(+) = 3alpha,12alpha-dihydroxy-7-oxo-5beta-cholanate + NADH + H(+). It catalyses the reaction (3S)-3-hydroxybutanoyl-CoA + NAD(+) = acetoacetyl-CoA + NADH + H(+). The enzyme catalyses (3S)-hydroxyoctanoyl-CoA + NAD(+) = 3-oxooctanoyl-CoA + NADH + H(+). It carries out the reaction (3S)-hydroxyhexadecanoyl-CoA + NAD(+) = 3-oxohexadecanoyl-CoA + NADH + H(+). The catalysed reaction is 17beta-hydroxy-5alpha-androstan-3-one + NAD(+) = 5alpha-androstan-3,17-dione + NADH + H(+). It catalyses the reaction 5alpha-pregnan-20beta-ol-3-one + NAD(+) = 5alpha-pregnane-3,20-dione + NADH + H(+). The enzyme catalyses 3alpha-hydroxy-5alpha-pregnan-20-one + NAD(+) = 5alpha-pregnane-3,20-dione + NADH + H(+). It carries out the reaction cortisone + NAD(+) = 17alpha-hydroxypregn-4-en-3,11,20-trione-21-al + NADH + H(+). The catalysed reaction is 11-dehydrocorticosterone + NAD(+) = pregn-4-ene-3,11,20,21-tetraone + NADH + H(+). It catalyses the reaction cortisol + NAD(+) = 11beta,17alpha-dihydroxypregn-4-ene-3,20,21-trione + NADH + H(+). The enzyme catalyses chenodeoxycholate + NAD(+) = 7-oxolithocholate + NADH + H(+). It carries out the reaction ursodeoxycholate + NAD(+) = 7-oxolithocholate + NADH + H(+). The catalysed reaction is 3beta,7beta-dihydroxy-5beta-cholan-24-oate + NAD(+) = 3beta-hydroxy-7-oxo-5beta-cholan-24-oate + NADH + H(+). It functions in the pathway amino-acid degradation; L-isoleucine degradation. It participates in lipid metabolism; fatty acid beta-oxidation. Its pathway is steroid metabolism. The protein operates within lipid metabolism; bile acid biosynthesis. Functionally, mitochondrial dehydrogenase involved in pathways of fatty acid, branched-chain amino acid and steroid metabolism. Acts as (S)-3-hydroxyacyl-CoA dehydrogenase in mitochondrial fatty acid beta-oxidation, a major degradation pathway of fatty acids. Catalyzes the third step in the beta-oxidation cycle, namely the reversible conversion of (S)-3-hydroxyacyl-CoA to 3-ketoacyl-CoA. Preferentially accepts straight medium- and short-chain acyl-CoA substrates with highest efficiency for (3S)-hydroxybutanoyl-CoA. Acts as 3-hydroxy-2-methylbutyryl-CoA dehydrogenase in branched-chain amino acid catabolic pathway. Catalyzes the oxidation of 3-hydroxy-2-methylbutanoyl-CoA into 2-methyl-3-oxobutanoyl-CoA, a step in isoleucine degradation pathway. Has hydroxysteroid dehydrogenase activity toward steroid hormones and bile acids. Catalyzes the oxidation of 3alpha-, 17beta-, 20beta- and 21-hydroxysteroids and 7alpha- and 7beta-hydroxy bile acids. Oxidizes allopregnanolone/brexanolone at the 3alpha-hydroxyl group, which is known to be critical for the activation of gamma-aminobutyric acid receptors (GABAARs) chloride channel. Has phospholipase C-like activity toward cardiolipin and its oxidized species. Likely oxidizes the 2'-hydroxyl in the head group of cardiolipin to form a ketone intermediate that undergoes nucleophilic attack by water and fragments into diacylglycerol, dihydroxyacetone and orthophosphate. Has higher affinity for cardiolipin with oxidized fatty acids and may degrade these species during the oxidative stress response to protect cells from apoptosis. By interacting with intracellular amyloid-beta, it may contribute to the neuronal dysfunction associated with Alzheimer disease (AD). Essential for structural and functional integrity of mitochondria. In terms of biological role, in addition to mitochondrial dehydrogenase activity, moonlights as a component of mitochondrial ribonuclease P, a complex that cleaves tRNA molecules in their 5'-ends. Together with TRMT10C/MRPP1, forms a subcomplex of the mitochondrial ribonuclease P, named MRPP1-MRPP2 subcomplex, which displays functions that are independent of the ribonuclease P activity. The MRPP1-MRPP2 subcomplex catalyzes the formation of N(1)-methylguanine and N(1)-methyladenine at position 9 (m1G9 and m1A9, respectively) in tRNAs; HSD17B10/MRPP2 acting as a non-catalytic subunit. The MRPP1-MRPP2 subcomplex also acts as a tRNA maturation platform: following 5'-end cleavage by the mitochondrial ribonuclease P complex, the MRPP1-MRPP2 subcomplex enhances the efficiency of 3'-processing catalyzed by ELAC2, retains the tRNA product after ELAC2 processing and presents the nascent tRNA to the mitochondrial CCA tRNA nucleotidyltransferase TRNT1 enzyme. Associates with mitochondrial DNA complexes at the nucleoids to initiate RNA processing and ribosome assembly. The polypeptide is 3-hydroxyacyl-CoA dehydrogenase type-2 (Hsd17b10) (Rattus norvegicus (Rat)).